The following is a 105-amino-acid chain: Flexible cuticle protein 12 (105 aa).

Positions 1 to 16 (MKSFVVVALLVAVAAA) are cleaved as a signal peptide. Residues 37 to 105 (VEGFQYGYET…KPVGAHIPVA (69 aa)) form the Chitin-binding type R&amp;R domain.

The sequence is that of Flexible cuticle protein 12 (CP12) from Hyalophora cecropia (Cecropia moth).